A 37-amino-acid polypeptide reads, in one-letter code: MTTISNLPAIFVPLVGLVFPAIAMVSLSLHVQKNKIF.

The helical transmembrane segment at 7–27 threads the bilayer; that stretch reads LPAIFVPLVGLVFPAIAMVSL.

Belongs to the PsaI family.

Its subcellular location is the plastid. The protein resides in the chloroplast thylakoid membrane. In terms of biological role, may help in the organization of the PsaL subunit. The sequence is that of Photosystem I reaction center subunit VIII from Morus indica (Mulberry).